The primary structure comprises 250 residues: Entry-fusion complex associated protein OPG095 (250 aa).

Glycine 2 is lipidated: N-myristoyl glycine; by host. The tract at residues 2 to 12 (GAAASIQTTVN) is targeting to MV membrane. The Virion surface segment spans residues 2–183 (GAAASIQTTV…IAPKQVAGTG (182 aa)). Disulfide bonds link cysteine 34–cysteine 57, cysteine 49–cysteine 136, and cysteine 116–cysteine 158. A helical membrane pass occupies residues 184–204 (VQFYMIVIGVIILAALFMYYA). Residues 205-250 (KRMLFTSTNDKIKLILANKENVHWTTYMDTFFRTSPMVIATTDMQN) are Intravirion-facing.

This sequence belongs to the orthopoxvirus OPG095 family. In terms of assembly, component of the entry fusion complex (EFC) composed of OPG053/F9, OPG076/O3, OPG086/G3, OPG094/G9, OPG095/L1, OPG099/L5, OPG107/H2, OPG143/A16, OPG104/J5, OPG147/A21 and OPG155/A28. Except for OPG095/L1 and OPG053/F9, each of the EFC proteins is required for assembly or stability of the complex. Myristoylated. Post-translationally, disulfid bonds are oxidized in the cytoplasm by OPG088 protein. In terms of processing, unglycosylated because produced in viral factories instead of the classic ER -Golgi route.

It is found in the virion membrane. In terms of biological role, component of the entry fusion complex (EFC), which consists of 11 proteins. During cell infection, this complex mediates entry of the virion core into the host cytoplasm by a two-step mechanism consisting of lipid mixing of the viral and cellular membranes and subsequent pore formation. In Bos taurus (Bovine), this protein is Entry-fusion complex associated protein OPG095 (OPG099).